A 220-amino-acid chain; its full sequence is 7-cyano-7-deazaguanine synthase (220 aa).

11–21 (VSGGMDSVTLM) contributes to the ATP binding site. Zn(2+) contacts are provided by C186, C194, C197, and C200.

The protein belongs to the QueC family. Zn(2+) serves as cofactor.

The enzyme catalyses 7-carboxy-7-deazaguanine + NH4(+) + ATP = 7-cyano-7-deazaguanine + ADP + phosphate + H2O + H(+). The protein operates within purine metabolism; 7-cyano-7-deazaguanine biosynthesis. Its function is as follows. Catalyzes the ATP-dependent conversion of 7-carboxy-7-deazaguanine (CDG) to 7-cyano-7-deazaguanine (preQ(0)). This chain is 7-cyano-7-deazaguanine synthase, found in Porphyromonas gingivalis (strain ATCC 33277 / DSM 20709 / CIP 103683 / JCM 12257 / NCTC 11834 / 2561).